The following is a 363-amino-acid chain: NAD(P)H-quinone oxidoreductase subunit 1, chloroplastic (363 aa).

Helical transmembrane passes span 28–48, 98–118, 129–149, 253–273, 274–294, 300–320, and 336–356; these read WVLA…LVIV, FSIG…VIPF, IGIF…LMSG, FGLF…FVTV, LYLG…LVEI, IFGT…FLFI, and LLNL…LLTT.

The protein belongs to the complex I subunit 1 family. NDH is composed of at least 16 different subunits, 5 of which are encoded in the nucleus.

It is found in the plastid. The protein resides in the chloroplast thylakoid membrane. The catalysed reaction is a plastoquinone + NADH + (n+1) H(+)(in) = a plastoquinol + NAD(+) + n H(+)(out). The enzyme catalyses a plastoquinone + NADPH + (n+1) H(+)(in) = a plastoquinol + NADP(+) + n H(+)(out). NDH shuttles electrons from NAD(P)H:plastoquinone, via FMN and iron-sulfur (Fe-S) centers, to quinones in the photosynthetic chain and possibly in a chloroplast respiratory chain. The immediate electron acceptor for the enzyme in this species is believed to be plastoquinone. Couples the redox reaction to proton translocation, and thus conserves the redox energy in a proton gradient. The chain is NAD(P)H-quinone oxidoreductase subunit 1, chloroplastic from Citrus sinensis (Sweet orange).